A 227-amino-acid polypeptide reads, in one-letter code: MIVTQIAGKIQVIFGPMFSGKTTELIRRIKRFNFANKKCLLIKYSKDTRYNDNIDKSFLVTHDKQNYQAFPCSILEDVKEQAQNYDVIGIDEGQFFPDVVQFSEDLANQGKTVIIAALDGTFQRKPFQSVIDLVSKAEYITKLTAVCMVCYNEAAFSKRIVESDDIELIGGIDKYISVCRGCYNSDQNEGNSTKPSKTARHSHSQSAPSVAPLAVNINPDDHLNNDY.

ATP-binding positions include 15 to 22 (GPMFSGKT), 47 to 49 (DTR), and 91 to 94 (DEGQ). E92 acts as the Proton acceptor in catalysis. F122 lines the substrate pocket. 2 residues coordinate Zn(2+): C147 and C150. Substrate is bound by residues 166–170 (IELIG) and Y175. 2 residues coordinate Zn(2+): C179 and C182. Polar residues predominate over residues 187-196 (QNEGNSTKPS). Positions 187–227 (QNEGNSTKPSKTARHSHSQSAPSVAPLAVNINPDDHLNNDY) are disordered.

This sequence belongs to the thymidine kinase family. In terms of assembly, interacts with calmodulin in the presence of Ca(2+).

It carries out the reaction thymidine + ATP = dTMP + ADP + H(+). The chain is Thymidine kinase 1 from Dictyostelium discoideum (Social amoeba).